The primary structure comprises 177 residues: VKSTNLMAFVATKMLERQEDLDTCTEMQVEKMKTSTKARLRTESSFAPRTWEDAIKDEILRRSVDTSSLDKWPELKQELENVSDALKADSLWLPMKSLSLYSKVSNQEPSSIPIGEMKHQILTRLKLICSRLEKLDLNLSKAVLGIQNSEDLILIIYNRDVCKNTILMIKSLCNSLI.

2 short sequence motifs (nuclear export signal) span residues L91–L100 and M117–L127.

As to quaternary structure, binds M1 protein. May interact with human nucleoporins and exportin XPO1/CRM1.

Its subcellular location is the virion. It is found in the host nucleus. In terms of biological role, mediates the nuclear export of encapsidated genomic RNAs (ribonucleoproteins, RNPs). Acts as an adapter between viral RNPs complexes and the nuclear export machinery of the cell. Possesses no intrinsic RNA-binding activity, but includes a C-terminal M1-binding domain. This domain is believed to allow recognition of RNPs to which the M1 protein is bound. Because the M1 protein is not available in large quantities until the later stages of infection, such an indirect recognition mechanism probably ensures that genomic RNPs are not exported from the nucleus before sufficient quantities of viral mRNA and progeny genomic RNA have been synthesized. Furthermore, the RNPs enters the cytoplasm only when they have associated with the M1 protein that is necessary to guide them to the plasma membrane. May down-regulate viral RNA synthesis when overproduced. The polypeptide is Nuclear export protein (NS) (Homo sapiens (Human)).